Reading from the N-terminus, the 606-residue chain is Aspartate--tRNA(Asp/Asn) ligase (606 aa).

Glu-175 contributes to the L-aspartate binding site. An aspartate region spans residues 199-202; the sequence is QLFK. Arg-221 lines the L-aspartate pocket. Residues 221 to 223 and Gln-230 each bind ATP; that span reads RDE. His-453 is an L-aspartate binding site. An ATP-binding site is contributed by Glu-487. Residue Arg-494 participates in L-aspartate binding. Position 539–542 (539–542) interacts with ATP; that stretch reads GWDR. Residues 564–606 are disordered; sequence GGVDPLTDAPGTIPAEQRKETGVDFKPEKAAKAAQGEKAGKES. Over residues 579–594 the composition is skewed to basic and acidic residues; the sequence is EQRKETGVDFKPEKAA.

The protein belongs to the class-II aminoacyl-tRNA synthetase family. Type 1 subfamily. As to quaternary structure, homodimer.

It is found in the cytoplasm. The enzyme catalyses tRNA(Asx) + L-aspartate + ATP = L-aspartyl-tRNA(Asx) + AMP + diphosphate. Its function is as follows. Aspartyl-tRNA synthetase with relaxed tRNA specificity since it is able to aspartylate not only its cognate tRNA(Asp) but also tRNA(Asn). Reaction proceeds in two steps: L-aspartate is first activated by ATP to form Asp-AMP and then transferred to the acceptor end of tRNA(Asp/Asn). The protein is Aspartate--tRNA(Asp/Asn) ligase of Corynebacterium aurimucosum (strain ATCC 700975 / DSM 44827 / CIP 107346 / CN-1) (Corynebacterium nigricans).